The chain runs to 99 residues: Large ribosomal subunit protein bL28 (99 aa).

Belongs to the bacterial ribosomal protein bL28 family.

The protein is Large ribosomal subunit protein bL28 of Caulobacter vibrioides (strain ATCC 19089 / CIP 103742 / CB 15) (Caulobacter crescentus).